The chain runs to 265 residues: Molybdenum-pterin-binding protein MopA (265 aa).

Mop domains lie at 126–192 and 198–264; these read RTSN…MLAA and RISA…ILAM.

This sequence belongs to the ModE family.

The chain is Molybdenum-pterin-binding protein MopA (mopA) from Rhodobacter capsulatus (Rhodopseudomonas capsulata).